The primary structure comprises 336 residues: COP9 signalosome complex subunit 5 (336 aa).

The MPN domain occupies 44-181; sequence VRISSVAMIK…IGAFRTIPEG (138 aa). 3 residues coordinate Zn(2+): H127, H129, and D140. The short motif at 127–140 is the JAMM motif element; sequence HSHPGYGCWLSGID.

The protein belongs to the peptidase M67A family. CSN5 subfamily. In terms of assembly, component of the COP9 signalosome (CSN) complex.

The protein localises to the cytoplasm. Its subcellular location is the nucleus. Catalytic component of the COP9 signalosome (CSN) complex that acts as an regulator of the ubiquitin (Ubl) conjugation pathway by mediating the deneddylation of the cullin subunit of SCF-type E3 ubiquitin-protein ligase complexes. The CSN complex is involved in the regulation of the circadian clock through its control of the stability of the SCF(FWD-1) complex. This chain is COP9 signalosome complex subunit 5 (csn-5), found in Neurospora crassa (strain ATCC 24698 / 74-OR23-1A / CBS 708.71 / DSM 1257 / FGSC 987).